The chain runs to 260 residues: Adenosylcobinamide-GDP ribazoletransferase (260 aa).

The next 7 membrane-spanning stretches (helical) occupy residues F31–F51, I57–L77, Y108–I128, A131–F151, F173–F193, L206–S226, and L240–L260.

It belongs to the CobS family. It depends on Mg(2+) as a cofactor.

Its subcellular location is the cell inner membrane. It catalyses the reaction alpha-ribazole + adenosylcob(III)inamide-GDP = adenosylcob(III)alamin + GMP + H(+). The catalysed reaction is alpha-ribazole 5'-phosphate + adenosylcob(III)inamide-GDP = adenosylcob(III)alamin 5'-phosphate + GMP + H(+). It participates in cofactor biosynthesis; adenosylcobalamin biosynthesis; adenosylcobalamin from cob(II)yrinate a,c-diamide: step 7/7. Joins adenosylcobinamide-GDP and alpha-ribazole to generate adenosylcobalamin (Ado-cobalamin). Also synthesizes adenosylcobalamin 5'-phosphate from adenosylcobinamide-GDP and alpha-ribazole 5'-phosphate. The protein is Adenosylcobinamide-GDP ribazoletransferase of Treponema denticola (strain ATCC 35405 / DSM 14222 / CIP 103919 / JCM 8153 / KCTC 15104).